The chain runs to 155 residues: Transcriptional repressor NrdR (155 aa).

Residues 3 to 34 (CPFCNQTDTKVIDSRLVADGVQVRRRRECQAC) fold into a zinc finger. Positions 49 to 139 (PKVIKQDGTR…VYRSFQDISE (91 aa)) constitute an ATP-cone domain.

This sequence belongs to the NrdR family. Zn(2+) serves as cofactor.

Its function is as follows. Negatively regulates transcription of bacterial ribonucleotide reductase nrd genes and operons by binding to NrdR-boxes. This chain is Transcriptional repressor NrdR, found in Teredinibacter turnerae (strain ATCC 39867 / T7901).